The primary structure comprises 215 residues: MIDLYFAPTPNGHKITLFLEEAELDYRLIKVDLGKGGQFRPEFLRISPNNKIPAIVDHSPADGGEPLSLFESGAILLYLAEKTGLFLSHETRERAATLQWLFWQVGGLGPMLGQNHHFNHAAPQTIPYAIERYQVETQRLYHVLNKRLENSPWLGGENYSIADIACWPWVNAWTRQRIDLAMYPAVKNWHERIRSRPATGQALLKAQLGDERSDS.

Positions 1 to 87 constitute a GST N-terminal domain; that stretch reads MIDLYFAPTP…YLAEKTGLFL (87 aa). Glutathione is bound by residues asparagine 11, glutamine 38, arginine 40, isoleucine 52, 71–72, and arginine 132; that span reads ES. Residues 90–215 enclose the GST C-terminal domain; the sequence is ETRERAATLQ…AQLGDERSDS (126 aa).

This sequence belongs to the GST superfamily. Nu-class GSH transferase family. As to quaternary structure, homodimer.

Its function is as follows. Exhibits a very robust glutathione (GSH)-dependent disulfide-bond reductase activity toward the model substrate, 2-hydroxyethyl disulfide; the actual physiological substrates are not known. Also has a low GSH-dependent hydroperoxidase activity toward cumene hydroperoxide, but does not reduce H(2)O(2), tert-butyl hydroperoxide, benzyl peroxide, or lauroyl peroxide. Exhibits little or no GSH transferase activity with most typical electrophilic substrates, and has no detectable transferase activity using glutathionylspermidine (GspSH) as the nucleophilic substrate. Is involved in defense against oxidative stress, probably via its peroxidase activity. This Escherichia coli (strain K12) protein is Disulfide-bond oxidoreductase YfcG (yfcG).